A 259-amino-acid polypeptide reads, in one-letter code: DNA repair protein RecO (259 aa).

This sequence belongs to the RecO family.

In terms of biological role, involved in DNA repair and RecF pathway recombination. In Syntrophus aciditrophicus (strain SB), this protein is DNA repair protein RecO.